The primary structure comprises 131 residues: MWQEFKKFAVRGNVIDLAVGVIIGGAFGKIVSSLVNDIIMPLVGLILGGIDFSGLSWKVGEAEVKYGAFLQTVVDFLVIAFSIFLFVKLLNNLHERIKKQEETKQTAPTMTKEQQLLTEIRDLLKQQKETP.

The next 3 helical transmembrane spans lie at 8–28 (FAVRGNVIDLAVGVIIGGAFG), 30–50 (IVSSLVNDIIMPLVGLILGGI), and 67–87 (GAFLQTVVDFLVIAFSIFLFV).

The protein belongs to the MscL family. Homopentamer.

Its subcellular location is the cell membrane. Its function is as follows. Channel that opens in response to stretch forces in the membrane lipid bilayer. May participate in the regulation of osmotic pressure changes within the cell. This Anoxybacillus flavithermus (strain DSM 21510 / WK1) protein is Large-conductance mechanosensitive channel.